Here is a 187-residue protein sequence, read N- to C-terminus: Cytochrome b-245 chaperone 1 (187 aa).

The chain crosses the membrane as a helical span at residues 20 to 42 (GIRSWSLLVGILSIGLAAAYYSG). The residue at position 168 (serine 168) is a Phosphoserine.

Belongs to the CYBC1 family. In terms of assembly, interacts with CYBB; CYBC1 may act as a chaperone stabilizing Cytochrome b-245 heterodimer.

The protein resides in the endoplasmic reticulum membrane. Its function is as follows. Functions as a chaperone necessary for a stable expression of the CYBA and CYBB subunits of the cytochrome b-245 heterodimer. Controls the phagocyte respiratory burst and is essential for innate immunity. The sequence is that of Cytochrome b-245 chaperone 1 from Bos taurus (Bovine).